The sequence spans 317 residues: Olfactory receptor 2F2 (317 aa).

Topologically, residues 1-25 (MEIDNQTWVREFILLGLSSDWCTQI) are extracellular. N-linked (GlcNAc...) asparagine glycosylation occurs at Asn-5. The chain crosses the membrane as a helical span at residues 26 to 49 (SLFSLFLVTYLMTVLGNCLIVLLI). Residues 50-57 (RLDSRLHT) lie on the Cytoplasmic side of the membrane. The helical transmembrane segment at 58-79 (PMYFFLTNLSLVDVSYATSVVP) threads the bilayer. The Extracellular portion of the chain corresponds to 80–100 (QLLAHFLAEHKAIPFQSCAAQ). An intrachain disulfide couples Cys-97 to Cys-189. Residues 101–120 (LFFSLALGGIEFVLLAVMAY) traverse the membrane as a helical segment. The Cytoplasmic portion of the chain corresponds to 121–139 (DRHVAVSDRLRYSAIMHGG). Residues 140-158 (LCARLAITSWVSGSINSLV) traverse the membrane as a helical segment. At 159 to 195 (QTAITFQLPMCTNKFIDHISCELLAVVRLACVDTSSN) the chain is on the extracellular side. Residues 196–219 (EAAIMVSSIVLLMTPFCLVLLSYI) traverse the membrane as a helical segment. The Cytoplasmic segment spans residues 220 to 236 (RIISTILKIQSREGRKK). Residues 237–259 (AFHTCASHLTVVALCYGTTIFTY) traverse the membrane as a helical segment. The Extracellular portion of the chain corresponds to 260–272 (IQPHSGPSVLQEK). The helical transmembrane segment at 273–292 (LISVFYAIVMPLLNPVIYSL) threads the bilayer. At 293–317 (RNKEVKGAWHKLLEKFSGLTSKLGT) the chain is on the cytoplasmic side.

This sequence belongs to the G-protein coupled receptor 1 family.

The protein localises to the cell membrane. Its function is as follows. Odorant receptor. This is Olfactory receptor 2F2 (OR2F2) from Homo sapiens (Human).